The primary structure comprises 271 residues: Virulence regulon transcriptional activator VirF (271 aa).

The region spanning 167 to 265 is the HTH araC/xylS-type domain; the sequence is ERLQKFMEEN…GCTPSQARLT (99 aa). 2 consecutive DNA-binding regions (H-T-H motif) follow at residues 184–205 and 232–255; these read SKFA…GTVY and IVDI…RRRF.

Functionally, transcriptional activator of the Yersinia virulence regulon. This chain is Virulence regulon transcriptional activator VirF (virF), found in Yersinia enterocolitica serotype O:8 / biotype 1B (strain NCTC 13174 / 8081).